The sequence spans 113 residues: Iron-sulfur cluster insertion protein ErpA (113 aa).

Iron-sulfur cluster is bound by residues Cys-41, Cys-105, and Cys-107.

The protein belongs to the HesB/IscA family. In terms of assembly, homodimer. Iron-sulfur cluster serves as cofactor.

Functionally, required for insertion of 4Fe-4S clusters for at least IspG. The chain is Iron-sulfur cluster insertion protein ErpA from Actinobacillus pleuropneumoniae serotype 5b (strain L20).